The sequence spans 80 residues: NAD(P)H-quinone oxidoreductase subunit O (80 aa).

It belongs to the complex I NdhO subunit family. NDH-1 can be composed of about 15 different subunits; different subcomplexes with different compositions have been identified which probably have different functions.

It is found in the cellular thylakoid membrane. It catalyses the reaction a plastoquinone + NADH + (n+1) H(+)(in) = a plastoquinol + NAD(+) + n H(+)(out). It carries out the reaction a plastoquinone + NADPH + (n+1) H(+)(in) = a plastoquinol + NADP(+) + n H(+)(out). NDH-1 shuttles electrons from an unknown electron donor, via FMN and iron-sulfur (Fe-S) centers, to quinones in the respiratory and/or the photosynthetic chain. The immediate electron acceptor for the enzyme in this species is believed to be plastoquinone. Couples the redox reaction to proton translocation, and thus conserves the redox energy in a proton gradient. Cyanobacterial NDH-1 also plays a role in inorganic carbon-concentration. The chain is NAD(P)H-quinone oxidoreductase subunit O from Prochlorococcus marinus subsp. pastoris (strain CCMP1986 / NIES-2087 / MED4).